Reading from the N-terminus, the 259-residue chain is Putative protein phosphatase (259 aa).

The PPM-type phosphatase domain maps to 8–255 (LFASLSKKGP…DNITLNLINL (248 aa)).

It carries out the reaction O-phospho-L-seryl-[protein] + H2O = L-seryl-[protein] + phosphate. The catalysed reaction is O-phospho-L-threonyl-[protein] + H2O = L-threonyl-[protein] + phosphate. This Mycoplasma pneumoniae (strain ATCC 29342 / M129 / Subtype 1) (Mycoplasmoides pneumoniae) protein is Putative protein phosphatase.